A 191-amino-acid polypeptide reads, in one-letter code: Protein YceI (191 aa).

The first 22 residues, 1–22, serve as a signal peptide directing secretion; the sequence is MKKSLLGLTFASLMFSAGSAVA.

It belongs to the UPF0312 family. Type 1 subfamily.

The protein localises to the periplasm. In Escherichia coli O17:K52:H18 (strain UMN026 / ExPEC), this protein is Protein YceI.